Consider the following 190-residue polypeptide: Large ribosomal subunit protein bL25 (190 aa).

Belongs to the bacterial ribosomal protein bL25 family. CTC subfamily. In terms of assembly, part of the 50S ribosomal subunit; part of the 5S rRNA/L5/L18/L25 subcomplex. Contacts the 5S rRNA. Binds to the 5S rRNA independently of L5 and L18.

Its function is as follows. This is one of the proteins that binds to the 5S RNA in the ribosome where it forms part of the central protuberance. The polypeptide is Large ribosomal subunit protein bL25 (Neisseria meningitidis serogroup C / serotype 2a (strain ATCC 700532 / DSM 15464 / FAM18)).